The chain runs to 293 residues: Alcohol dehydrogenase 1 (293 aa).

The Zn(2+) site is built by Cys26, Cys29, Cys32, Cys40, and Cys104. Residues Gly129–Gly134, Asp153, Arg158, Thr199, Val222, Val222–Val224, and Phe249 each bind NAD(+).

Belongs to the zinc-containing alcohol dehydrogenase family. Homodimer. It depends on Zn(2+) as a cofactor.

Its subcellular location is the cytoplasm. It catalyses the reaction a primary alcohol + NAD(+) = an aldehyde + NADH + H(+). It carries out the reaction a secondary alcohol + NAD(+) = a ketone + NADH + H(+). The polypeptide is Alcohol dehydrogenase 1 (ADH1) (Zea luxurians (Guatemalan teosinte)).